The chain runs to 510 residues: NAD(P)H-quinone oxidoreductase subunit 2, chloroplastic (510 aa).

The next 11 membrane-spanning stretches (helical) occupy residues 24–44 (LLLFHGSFIFPECILIFGLIL), 59–79 (WFYFISSTSLVMSITALLFRW), 99–119 (IFQFLILLCSTLCIPLSVEYI), 124–144 (MAITEFLLFVLTATLGGMFLC), 149–169 (LITIFVAPECFSLCSYLLSGY), 183–203 (YLLMGGASSSILVHGFSWLYG), 295–315 (WHLLLEILAILSMILGNLIAI), 323–343 (MLAYSSIGQIGYVIIGIIVGD), 347–367 (GYASMITYMLFYISMNLGTFA), 395–415 (ALSSALCLLSLGGLPPLAGFF), and 418–438 (LHLFWCGWQAGLYFLVSIGLL).

The protein belongs to the complex I subunit 2 family. NDH is composed of at least 16 different subunits, 5 of which are encoded in the nucleus.

The protein resides in the plastid. The protein localises to the chloroplast thylakoid membrane. It catalyses the reaction a plastoquinone + NADH + (n+1) H(+)(in) = a plastoquinol + NAD(+) + n H(+)(out). It carries out the reaction a plastoquinone + NADPH + (n+1) H(+)(in) = a plastoquinol + NADP(+) + n H(+)(out). NDH shuttles electrons from NAD(P)H:plastoquinone, via FMN and iron-sulfur (Fe-S) centers, to quinones in the photosynthetic chain and possibly in a chloroplast respiratory chain. The immediate electron acceptor for the enzyme in this species is believed to be plastoquinone. Couples the redox reaction to proton translocation, and thus conserves the redox energy in a proton gradient. The polypeptide is NAD(P)H-quinone oxidoreductase subunit 2, chloroplastic (Maianthemum racemosum (False Solomon's-seal)).